Consider the following 173-residue polypeptide: Mesencephalic astrocyte-derived neurotrophic factor homolog (173 aa).

Positions 1–22 (MNTSHIVLMICFIVGVGQTALA) are cleaved as a signal peptide. Intrachain disulfides connect cysteine 28-cysteine 114, cysteine 31-cysteine 103, cysteine 61-cysteine 72, and cysteine 148-cysteine 151.

It belongs to the ARMET family.

The protein resides in the secreted. Required during the maturation of the embryonic nervous system for maintenance of neuronal and cuticular connectivity. Essential for maintenance of dopaminergic neurons and dopamine levels. The protein is Mesencephalic astrocyte-derived neurotrophic factor homolog of Drosophila virilis (Fruit fly).